Reading from the N-terminus, the 401-residue chain is Acetate kinase (401 aa).

N7 contacts Mg(2+). K14 provides a ligand contact to ATP. Substrate is bound at residue R91. Catalysis depends on D148, which acts as the Proton donor/acceptor. ATP-binding positions include 208 to 212 (HLGNG), 283 to 285 (DFR), and 332 to 336 (GVGEN). E385 provides a ligand contact to Mg(2+).

The protein belongs to the acetokinase family. In terms of assembly, homodimer. The cofactor is Mg(2+). Mn(2+) is required as a cofactor.

The protein localises to the cytoplasm. The catalysed reaction is acetate + ATP = acetyl phosphate + ADP. Its pathway is metabolic intermediate biosynthesis; acetyl-CoA biosynthesis; acetyl-CoA from acetate: step 1/2. In terms of biological role, catalyzes the formation of acetyl phosphate from acetate and ATP. Can also catalyze the reverse reaction. The protein is Acetate kinase of Thermoanaerobacter pseudethanolicus (strain ATCC 33223 / 39E) (Clostridium thermohydrosulfuricum).